The chain runs to 492 residues: MFHAFTFLKGGRFYSSLTVKSLYEQVHHTSHDPISINGWIKSIRLLKRIAFLDLQDGTSVNPLRIVIPLTNTDEVQFLKILKTGQTLSISNATWQSTPNRKQPFELQIKNPVKSIKLVGPVSENYPLQKKYQTLRYLRSLPTLKYRTAYLSAILRLRSFVEFQFMLYFQKNHFTKVSPPILTSNDCEGAGELFQVSTNTSPTASSYFGKPTYLTVSTQLHLEILALSLSRCWTLSPCFRAEKSDTPRHLSEFWMLEVEMCFVNSVNELTSFVETTIKHIIKACIDNQQELLPKQFISSQENNASSELSINQETQQIKTRWEDLINEKWHNITYTNAIEILKKRHNEVSHFKYEPKWGQPLQTEHEKFLAGEYFKSPVFVTDYPRLCKPFYMKQNSTPDDTVGCFDLLVPGMGEIIGGSLREDDYDKLCREMKARGMNRSGELDWYVSLRKEGSAPHGGFGLGFERFISYLYGNHNIKDAIPFYRTSAESIDF.

This sequence belongs to the class-II aminoacyl-tRNA synthetase family.

Its subcellular location is the mitochondrion matrix. It catalyses the reaction tRNA(Asn) + L-asparagine + ATP = L-asparaginyl-tRNA(Asn) + AMP + diphosphate + H(+). In terms of biological role, catalyzes the attachment of asparagine to tRNA(Asn) in the mitochondrion. The sequence is that of Asparagine--tRNA ligase, mitochondrial (SLM5) from Saccharomyces cerevisiae (strain ATCC 204508 / S288c) (Baker's yeast).